Consider the following 286-residue polypeptide: Pantothenate synthetase (286 aa).

Met30–His37 contacts ATP. Residue His37 is the Proton donor of the active site. A (R)-pantoate-binding site is contributed by Gln64. Gln64 lines the beta-alanine pocket. Gly151–Asp154 contacts ATP. Gln157 provides a ligand contact to (R)-pantoate. Residues Leu180 and Leu188–Arg191 each bind ATP.

The protein belongs to the pantothenate synthetase family. As to quaternary structure, homodimer.

It localises to the cytoplasm. The enzyme catalyses (R)-pantoate + beta-alanine + ATP = (R)-pantothenate + AMP + diphosphate + H(+). It functions in the pathway cofactor biosynthesis; (R)-pantothenate biosynthesis; (R)-pantothenate from (R)-pantoate and beta-alanine: step 1/1. Its function is as follows. Catalyzes the condensation of pantoate with beta-alanine in an ATP-dependent reaction via a pantoyl-adenylate intermediate. This Leptothrix cholodnii (strain ATCC 51168 / LMG 8142 / SP-6) (Leptothrix discophora (strain SP-6)) protein is Pantothenate synthetase.